The sequence spans 106 residues: Urease subunit beta (106 aa).

This sequence belongs to the urease beta subunit family. In terms of assembly, heterotrimer of UreA (gamma), UreB (beta) and UreC (alpha) subunits. Three heterotrimers associate to form the active enzyme.

The protein resides in the cytoplasm. It catalyses the reaction urea + 2 H2O + H(+) = hydrogencarbonate + 2 NH4(+). It participates in nitrogen metabolism; urea degradation; CO(2) and NH(3) from urea (urease route): step 1/1. This is Urease subunit beta from Prochlorococcus marinus (strain NATL1A).